A 90-amino-acid polypeptide reads, in one-letter code: Lectin-1 (90 aa).

Position 1 is a pyrrolidone carboxylic acid (Q1). A disulfide bond links C46 and C71.

Post-translationally, the N-terminus is blocked. Contains seven disulfide bonds. In terms of processing, proteolytically cleaved. Major mature form may consist of cleaved, disulfide-bonded N-terminal and C-terminal chains.

Lectin with specificity for complex N-linked glycans and O-linked glycans. Has hemagglutinating activity towards rabbit erythrocytes. In Hypnea musciformis (Red alga), this protein is Lectin-1.